The chain runs to 586 residues: NADH-quinone oxidoreductase subunit C/D 2 (586 aa).

Residues 1–173 (MKWVNKGTVE…RTDPPSHDFE (173 aa)) form an NADH dehydrogenase I subunit C region. The interval 197–586 (AELVLNWGPL…LDPVVGETDR (390 aa)) is NADH dehydrogenase I subunit D.

In the N-terminal section; belongs to the complex I 30 kDa subunit family. The protein in the C-terminal section; belongs to the complex I 49 kDa subunit family. In terms of assembly, NDH-1 is composed of 13 different subunits. Subunits NuoB, CD, E, F, and G constitute the peripheral sector of the complex.

It is found in the cell inner membrane. The enzyme catalyses a quinone + NADH + 5 H(+)(in) = a quinol + NAD(+) + 4 H(+)(out). Functionally, NDH-1 shuttles electrons from NADH, via FMN and iron-sulfur (Fe-S) centers, to quinones in the respiratory chain. The immediate electron acceptor for the enzyme in this species is believed to be ubiquinone. Couples the redox reaction to proton translocation (for every two electrons transferred, four hydrogen ions are translocated across the cytoplasmic membrane), and thus conserves the redox energy in a proton gradient. This is NADH-quinone oxidoreductase subunit C/D 2 (nuoC2) from Aquifex aeolicus (strain VF5).